We begin with the raw amino-acid sequence, 271 residues long: Formamidopyrimidine-DNA glycosylase (271 aa).

Residue Pro2 is the Schiff-base intermediate with DNA of the active site. Residue Glu3 is the Proton donor of the active site. Residue Lys58 is the Proton donor; for beta-elimination activity of the active site. DNA-binding residues include His91, Arg110, and Arg152. The segment at 237–271 adopts an FPG-type zinc-finger fold; the sequence is RVYDRAGQPCRVCGEPIRCVRLGQRATYYCPRCQR. The active-site Proton donor; for delta-elimination activity is Arg261.

The protein belongs to the FPG family. Monomer. Zn(2+) serves as cofactor.

The enzyme catalyses Hydrolysis of DNA containing ring-opened 7-methylguanine residues, releasing 2,6-diamino-4-hydroxy-5-(N-methyl)formamidopyrimidine.. It carries out the reaction 2'-deoxyribonucleotide-(2'-deoxyribose 5'-phosphate)-2'-deoxyribonucleotide-DNA = a 3'-end 2'-deoxyribonucleotide-(2,3-dehydro-2,3-deoxyribose 5'-phosphate)-DNA + a 5'-end 5'-phospho-2'-deoxyribonucleoside-DNA + H(+). Involved in base excision repair of DNA damaged by oxidation or by mutagenic agents. Acts as a DNA glycosylase that recognizes and removes damaged bases. Has a preference for oxidized purines, such as 7,8-dihydro-8-oxoguanine (8-oxoG). Has AP (apurinic/apyrimidinic) lyase activity and introduces nicks in the DNA strand. Cleaves the DNA backbone by beta-delta elimination to generate a single-strand break at the site of the removed base with both 3'- and 5'-phosphates. The sequence is that of Formamidopyrimidine-DNA glycosylase from Methylococcus capsulatus (strain ATCC 33009 / NCIMB 11132 / Bath).